Here is a 316-residue protein sequence, read N- to C-terminus: Homoserine kinase (316 aa).

Residue 97–107 participates in ATP binding; sequence PHSRGLGSSAA.

Belongs to the GHMP kinase family. Homoserine kinase subfamily.

It is found in the cytoplasm. It carries out the reaction L-homoserine + ATP = O-phospho-L-homoserine + ADP + H(+). It functions in the pathway amino-acid biosynthesis; L-threonine biosynthesis; L-threonine from L-aspartate: step 4/5. Its function is as follows. Catalyzes the ATP-dependent phosphorylation of L-homoserine to L-homoserine phosphate. This Mycobacterium tuberculosis (strain ATCC 25618 / H37Rv) protein is Homoserine kinase.